The primary structure comprises 808 residues: Probable inorganic carbon transporter subunit DabA (808 aa).

Zn(2+)-binding residues include C335, D337, H497, and C512.

This sequence belongs to the inorganic carbon transporter (TC 9.A.2) DabA family. As to quaternary structure, forms a complex with DabB. It depends on Zn(2+) as a cofactor.

The protein localises to the cell inner membrane. Its function is as follows. Part of an energy-coupled inorganic carbon pump. The sequence is that of Probable inorganic carbon transporter subunit DabA from Rhodopseudomonas palustris (strain ATCC BAA-98 / CGA009).